Reading from the N-terminus, the 283-residue chain is MLRIAVQSKGRLFEETMALLQEADIKISTSKRILLVQSSNFPIEVLFLRDDDIPQSVAGGVADLGIVGENEFVERKEDAEVIKRLGFSKCRLSLAIPKDVDYPGLSWFEGRKIATSYPGILKDFMDRNGIHSDIHVITGSVEIAPGISLADAIFDIVSSGSTLVSNSLKEVEVVMKSEALLIGNKNMSEEKKEILNELLFRIEAVKAAEDKKYVLMNAPTERLKEIIEVLPGMKSPTVMPLAQEGWSSVHTVLDEKRFWEIIGKLKALGAEGILVLPIEKMIL.

Belongs to the ATP phosphoribosyltransferase family. Long subfamily. Mg(2+) is required as a cofactor.

The protein resides in the cytoplasm. It catalyses the reaction 1-(5-phospho-beta-D-ribosyl)-ATP + diphosphate = 5-phospho-alpha-D-ribose 1-diphosphate + ATP. It functions in the pathway amino-acid biosynthesis; L-histidine biosynthesis; L-histidine from 5-phospho-alpha-D-ribose 1-diphosphate: step 1/9. Feedback inhibited by histidine. Functionally, catalyzes the condensation of ATP and 5-phosphoribose 1-diphosphate to form N'-(5'-phosphoribosyl)-ATP (PR-ATP). Has a crucial role in the pathway because the rate of histidine biosynthesis seems to be controlled primarily by regulation of HisG enzymatic activity. This Phocaeicola vulgatus (strain ATCC 8482 / DSM 1447 / JCM 5826 / CCUG 4940 / NBRC 14291 / NCTC 11154) (Bacteroides vulgatus) protein is ATP phosphoribosyltransferase.